The chain runs to 175 residues: Small ribosomal subunit protein mS38 (175 aa).

This sequence belongs to the mitochondrion-specific ribosomal protein mS38 family. As to quaternary structure, component of the mitochondrial small ribosomal subunit (mt-SSU). Mature yeast 74S mitochondrial ribosomes consist of a small (37S) and a large (54S) subunit. The 37S small subunit contains a 15S ribosomal RNA (15S mt-rRNA) and at least 32 different proteins. The 54S large subunit contains a 21S rRNA (21S mt-rRNA) and at least 45 different proteins.

It localises to the mitochondrion. The protein localises to the mitochondrion inner membrane. Its function is as follows. Component of the mitochondrial ribosome (mitoribosome), a dedicated translation machinery responsible for the synthesis of mitochondrial genome-encoded proteins, including at least some of the essential transmembrane subunits of the mitochondrial respiratory chain. The mitoribosomes are attached to the mitochondrial inner membrane and translation products are cotranslationally integrated into the membrane. mS38 is also involved in the splicing of the COX1 mRNA. The sequence is that of Small ribosomal subunit protein mS38 (cox24) from Schizosaccharomyces pombe (strain 972 / ATCC 24843) (Fission yeast).